Here is a 127-residue protein sequence, read N- to C-terminus: uncharacterized protein (127 aa).

The chain crosses the membrane as a helical span at residues 91 to 113; the sequence is IYLIVSIAVSILAIIAFFIFLML.

The protein resides in the membrane. This is an uncharacterized protein from Bacillus subtilis (strain 168).